The primary structure comprises 367 residues: Phospho-N-acetylmuramoyl-pentapeptide-transferase (367 aa).

10 helical membrane-spanning segments follow: residues 27–47 (VLAA…VIRW), 73–93 (TMGG…WGDL), 97–117 (YVWT…YDDW), 132–152 (WKFF…AFSA), 167–187 (TMAY…VIVG), 200–220 (GLAI…AYVT), 237–257 (AGEL…FLWF), 264–284 (VFMG…VAVI), 289–309 (IVLL…MLQV), and 344–364 (QVVV…LSTL).

This sequence belongs to the glycosyltransferase 4 family. MraY subfamily. Mg(2+) is required as a cofactor.

The protein resides in the cell inner membrane. It carries out the reaction UDP-N-acetyl-alpha-D-muramoyl-L-alanyl-gamma-D-glutamyl-meso-2,6-diaminopimeloyl-D-alanyl-D-alanine + di-trans,octa-cis-undecaprenyl phosphate = di-trans,octa-cis-undecaprenyl diphospho-N-acetyl-alpha-D-muramoyl-L-alanyl-D-glutamyl-meso-2,6-diaminopimeloyl-D-alanyl-D-alanine + UMP. It functions in the pathway cell wall biogenesis; peptidoglycan biosynthesis. Functionally, catalyzes the initial step of the lipid cycle reactions in the biosynthesis of the cell wall peptidoglycan: transfers peptidoglycan precursor phospho-MurNAc-pentapeptide from UDP-MurNAc-pentapeptide onto the lipid carrier undecaprenyl phosphate, yielding undecaprenyl-pyrophosphoryl-MurNAc-pentapeptide, known as lipid I. The polypeptide is Phospho-N-acetylmuramoyl-pentapeptide-transferase (Dechloromonas aromatica (strain RCB)).